A 511-amino-acid polypeptide reads, in one-letter code: Bifunctional purine biosynthesis protein PurH (511 aa).

The region spanning 1 to 145 (MKKRALVSVS…KNHKFVSVIV (145 aa)) is the MGS-like domain.

The protein belongs to the PurH family.

The catalysed reaction is (6R)-10-formyltetrahydrofolate + 5-amino-1-(5-phospho-beta-D-ribosyl)imidazole-4-carboxamide = 5-formamido-1-(5-phospho-D-ribosyl)imidazole-4-carboxamide + (6S)-5,6,7,8-tetrahydrofolate. It catalyses the reaction IMP + H2O = 5-formamido-1-(5-phospho-D-ribosyl)imidazole-4-carboxamide. The protein operates within purine metabolism; IMP biosynthesis via de novo pathway; 5-formamido-1-(5-phospho-D-ribosyl)imidazole-4-carboxamide from 5-amino-1-(5-phospho-D-ribosyl)imidazole-4-carboxamide (10-formyl THF route): step 1/1. It functions in the pathway purine metabolism; IMP biosynthesis via de novo pathway; IMP from 5-formamido-1-(5-phospho-D-ribosyl)imidazole-4-carboxamide: step 1/1. The sequence is that of Bifunctional purine biosynthesis protein PurH from Bacillus cereus (strain Q1).